A 193-amino-acid chain; its full sequence is Crossover junction endodeoxyribonuclease RuvC (193 aa).

Residues aspartate 7, glutamate 68, and aspartate 141 contribute to the active site. The Mg(2+) site is built by aspartate 7, glutamate 68, and aspartate 141. A disordered region spans residues arginine 174–methionine 193. Basic residues predominate over residues alanine 183–methionine 193.

Belongs to the RuvC family. As to quaternary structure, homodimer which binds Holliday junction (HJ) DNA. The HJ becomes 2-fold symmetrical on binding to RuvC with unstacked arms; it has a different conformation from HJ DNA in complex with RuvA. In the full resolvosome a probable DNA-RuvA(4)-RuvB(12)-RuvC(2) complex forms which resolves the HJ. The cofactor is Mg(2+).

It localises to the cytoplasm. The enzyme catalyses Endonucleolytic cleavage at a junction such as a reciprocal single-stranded crossover between two homologous DNA duplexes (Holliday junction).. The RuvA-RuvB-RuvC complex processes Holliday junction (HJ) DNA during genetic recombination and DNA repair. Endonuclease that resolves HJ intermediates. Cleaves cruciform DNA by making single-stranded nicks across the HJ at symmetrical positions within the homologous arms, yielding a 5'-phosphate and a 3'-hydroxyl group; requires a central core of homology in the junction. The consensus cleavage sequence is 5'-(A/T)TT(C/G)-3'. Cleavage occurs on the 3'-side of the TT dinucleotide at the point of strand exchange. HJ branch migration catalyzed by RuvA-RuvB allows RuvC to scan DNA until it finds its consensus sequence, where it cleaves and resolves the cruciform DNA. This is Crossover junction endodeoxyribonuclease RuvC from Bifidobacterium animalis subsp. lactis (strain AD011).